The following is a 154-amino-acid chain: MFTQANLFLILLLAIALIAKNQSLLFAVSVLLIIKIVGLDQKLFPTIQSKGINWGVTIITIAVLVPIATGEIGFKQLGEAMRSSYAWIALGAGIAVALIAKNGLTLLENDPHITTALVIGTILAVALFGGVAVGPLIGAGIAYLAMQIVKLFTS.

Helical transmembrane passes span 8 to 28 (FLIL…LFAV), 54 to 74 (WGVT…EIGF), 87 to 107 (WIAL…LTLL), and 117 to 137 (LVIG…GPLI).

Belongs to the UPF0756 family.

The protein resides in the cell membrane. The chain is UPF0756 membrane protein YtwI (ytwI) from Bacillus subtilis (strain 168).